Reading from the N-terminus, the 103-residue chain is Histone H4.1 (103 aa).

A compositionally biased stretch (gly residues) spans 1 to 14 (MSGRGKGGKGLGKG). The disordered stretch occupies residues 1-20 (MSGRGKGGKGLGKGGAKRHR). At lysine 6 the chain carries N6-acetyl-N6-methyllysine; alternate. An N6-methyllysine; alternate mark is found at lysine 6, lysine 9, and lysine 13. An N6-acetyl-N6-methyllysine; alternate modification is found at lysine 13. The DNA-binding element occupies 17–21 (KRHRK). Lysine 92 is subject to N6-glutaryllysine.

It belongs to the histone H4 family. The nucleosome is a histone octamer containing two molecules each of H2A, H2B, H3 and H4 assembled in one H3-H4 heterotetramer and two H2A-H2B heterodimers. The octamer wraps approximately 147 bp of DNA. Post-translationally, glutarylation at Lys-92 (H4K91glu) destabilizes nucleosomes by promoting dissociation of the H2A-H2B dimers from nucleosomes.

The protein localises to the nucleus. The protein resides in the chromosome. Core component of nucleosome. Nucleosomes wrap and compact DNA into chromatin, limiting DNA accessibility to the cellular machineries which require DNA as a template. Histones thereby play a central role in transcription regulation, DNA repair, DNA replication and chromosomal stability. DNA accessibility is regulated via a complex set of post-translational modifications of histones, also called histone code, and nucleosome remodeling. This is Histone H4.1 (hhfA) from Emericella nidulans (strain FGSC A4 / ATCC 38163 / CBS 112.46 / NRRL 194 / M139) (Aspergillus nidulans).